Reading from the N-terminus, the 348-residue chain is SUMO-activating enzyme subunit 1 (348 aa).

Belongs to the ubiquitin-activating E1 family. As to quaternary structure, heterodimer of sae1 and uba2/sae2. The heterodimer corresponds to the two domains that are encoded on a single polypeptide chain in ubiquitin-activating enzyme E1. Interacts with ube2i.

The protein resides in the nucleus. It participates in protein modification; protein sumoylation. Functionally, the heterodimer acts as an E1 ligase for sumo1, sumo2, and sumo3. It mediates ATP-dependent activation of sumo proteins followed by formation of a thioester bond between a sumo protein and a conserved active site cysteine residue on uba2/sae2. This Danio rerio (Zebrafish) protein is SUMO-activating enzyme subunit 1 (sae1).